The chain runs to 699 residues: Elongation factor G (699 aa).

One can recognise a tr-type G domain in the interval 8 to 283 (EHIRNIGICA…AVVDFLPSPI (276 aa)). GTP contacts are provided by residues 17-24 (AHIDAGKT), 81-85 (DTPGH), and 135-138 (NKMD).

Belongs to the TRAFAC class translation factor GTPase superfamily. Classic translation factor GTPase family. EF-G/EF-2 subfamily.

The protein resides in the cytoplasm. Functionally, catalyzes the GTP-dependent ribosomal translocation step during translation elongation. During this step, the ribosome changes from the pre-translocational (PRE) to the post-translocational (POST) state as the newly formed A-site-bound peptidyl-tRNA and P-site-bound deacylated tRNA move to the P and E sites, respectively. Catalyzes the coordinated movement of the two tRNA molecules, the mRNA and conformational changes in the ribosome. This Rickettsia sibirica (strain ATCC VR-151 / 246) protein is Elongation factor G.